A 279-amino-acid polypeptide reads, in one-letter code: Biotin synthase (279 aa).

The 227-residue stretch at 2–228 (KTIMLCAICS…ETRVMIAGGR (227 aa)) folds into the Radical SAM core domain. The [4Fe-4S] cluster site is built by Cys-17, Cys-21, and Cys-24. The [2Fe-2S] cluster site is built by Cys-61, Cys-96, Cys-154, and Arg-221.

It belongs to the radical SAM superfamily. Biotin synthase family. As to quaternary structure, homodimer. [4Fe-4S] cluster is required as a cofactor. [2Fe-2S] cluster serves as cofactor.

The enzyme catalyses (4R,5S)-dethiobiotin + (sulfur carrier)-SH + 2 reduced [2Fe-2S]-[ferredoxin] + 2 S-adenosyl-L-methionine = (sulfur carrier)-H + biotin + 2 5'-deoxyadenosine + 2 L-methionine + 2 oxidized [2Fe-2S]-[ferredoxin]. It functions in the pathway cofactor biosynthesis; biotin biosynthesis; biotin from 7,8-diaminononanoate: step 2/2. Its function is as follows. Catalyzes the conversion of dethiobiotin (DTB) to biotin by the insertion of a sulfur atom into dethiobiotin via a radical-based mechanism. The chain is Biotin synthase from Campylobacter concisus (strain 13826).